A 544-amino-acid polypeptide reads, in one-letter code: Chaperonin GroEL (544 aa).

Residues 30–33 (TLGP), Lys51, 87–91 (DGTTT), Gly415, 479–481 (NAA), and Asp495 contribute to the ATP site. A compositionally biased stretch (low complexity) spans 525 to 537 (PQDTPATAAAPDM). Residues 525-544 (PQDTPATAAAPDMGGMGGMM) form a disordered region.

The protein belongs to the chaperonin (HSP60) family. In terms of assembly, forms a cylinder of 14 subunits composed of two heptameric rings stacked back-to-back. Interacts with the co-chaperonin GroES.

The protein localises to the cytoplasm. It carries out the reaction ATP + H2O + a folded polypeptide = ADP + phosphate + an unfolded polypeptide.. In terms of biological role, together with its co-chaperonin GroES, plays an essential role in assisting protein folding. The GroEL-GroES system forms a nano-cage that allows encapsulation of the non-native substrate proteins and provides a physical environment optimized to promote and accelerate protein folding. The sequence is that of Chaperonin GroEL from Ruthia magnifica subsp. Calyptogena magnifica.